Consider the following 172-residue polypeptide: Transcriptional regulator TAC1 (172 aa).

A disordered region spans residues methionine 1–serine 28. A compositionally biased stretch (polar residues) spans aspartate 15–serine 28. The C2H2-type zinc finger occupies tyrosine 35–histidine 57. Residues leucine 156–leucine 160 carry the EAR-like (transcriptional repression) motif.

In terms of tissue distribution, preferentially expressed in roots and flowers. Slightly expressed in leaves and stems.

The protein resides in the nucleus. In terms of biological role, activation factor which mediates telomerase activity and potentiates responses to auxin through the regulation of BT2. Binds in vitro to the DNA sequence 5'-GACAGTGTTAC-3' of the BT2 promoter. This chain is Transcriptional regulator TAC1 (TAC1), found in Arabidopsis thaliana (Mouse-ear cress).